We begin with the raw amino-acid sequence, 331 residues long: Sideroflexin-5 (331 aa).

4 helical membrane-spanning segments follow: residues 104 to 126, 153 to 175, 243 to 265, and 278 to 300; these read PFGWITVTGMLLPNPSWPTLLFW, YIGAYGAAVTAACSISGGLTYFI, TTMVRAFLPVPLLLMPPCIMPYL, and HIFVNAIVCTLSFAVSLPVALAL.

It belongs to the sideroflexin family.

It localises to the mitochondrion inner membrane. The enzyme catalyses citrate(in) = citrate(out). Its function is as follows. Mitochondrial amino-acid transporter. This is Sideroflexin-5 from Caenorhabditis elegans.